A 285-amino-acid chain; its full sequence is 4-diphosphocytidyl-2-C-methyl-D-erythritol kinase (285 aa).

Lysine 9 is an active-site residue. 89-99 provides a ligand contact to ATP; the sequence is PLGAGLGGGSS. The active site involves aspartate 131.

The protein belongs to the GHMP kinase family. IspE subfamily.

It catalyses the reaction 4-CDP-2-C-methyl-D-erythritol + ATP = 4-CDP-2-C-methyl-D-erythritol 2-phosphate + ADP + H(+). It functions in the pathway isoprenoid biosynthesis; isopentenyl diphosphate biosynthesis via DXP pathway; isopentenyl diphosphate from 1-deoxy-D-xylulose 5-phosphate: step 3/6. Its function is as follows. Catalyzes the phosphorylation of the position 2 hydroxy group of 4-diphosphocytidyl-2C-methyl-D-erythritol. This chain is 4-diphosphocytidyl-2-C-methyl-D-erythritol kinase, found in Thermodesulfovibrio yellowstonii (strain ATCC 51303 / DSM 11347 / YP87).